The sequence spans 192 residues: CASP-like protein 1E1 (192 aa).

The tract at residues 1-22 (MDSQNKNSVDAMDGIESRGMKE) is disordered. At 1–29 (MDSQNKNSVDAMDGIESRGMKERGGRTNS) the chain is on the cytoplasmic side. The chain crosses the membrane as a helical span at residues 30–50 (FLVLRVLAFVLTSTAAIVHGV). The Extracellular portion of the chain corresponds to 51 to 81 (NNQTETVPIQLTSSMPPLYVPVVAKWHYLSA). N-linked (GlcNAc...) asparagine glycosylation is present at N52. A helical transmembrane segment spans residues 82 to 102 (FVFFVVSNAIACSYAAISVML). Over 103-118 (SFCGKKSMVPIILTLD) the chain is Cytoplasmic. Residues 119-139 (LLMVALLFSSNGAATAIGVMG) traverse the membrane as a helical segment. The Extracellular segment spans residues 140-161 (YKGNSHVKWNKVCNVFGKFCNQ). A helical membrane pass occupies residues 162-182 (VAASVVLSLIGSIVFVLLVML). Residues 183-192 (TAFRLHNKSK) lie on the Cytoplasmic side of the membrane.

It belongs to the Casparian strip membrane proteins (CASP) family. As to quaternary structure, homodimer and heterodimers.

The protein localises to the cell membrane. This chain is CASP-like protein 1E1, found in Ricinus communis (Castor bean).